Reading from the N-terminus, the 692-residue chain is Elongation factor G 2 (692 aa).

The tr-type G domain occupies 8-283; that stretch reads EKTRNIGIMA…AVIDYMPSPV (276 aa). Residues 17–24, 81–85, and 135–138 contribute to the GTP site; these read AHIDAGKT, DTPGH, and NKMD.

The protein belongs to the TRAFAC class translation factor GTPase superfamily. Classic translation factor GTPase family. EF-G/EF-2 subfamily.

It is found in the cytoplasm. Catalyzes the GTP-dependent ribosomal translocation step during translation elongation. During this step, the ribosome changes from the pre-translocational (PRE) to the post-translocational (POST) state as the newly formed A-site-bound peptidyl-tRNA and P-site-bound deacylated tRNA move to the P and E sites, respectively. Catalyzes the coordinated movement of the two tRNA molecules, the mRNA and conformational changes in the ribosome. This is Elongation factor G 2 from Syntrophotalea carbinolica (strain DSM 2380 / NBRC 103641 / GraBd1) (Pelobacter carbinolicus).